The primary structure comprises 122 residues: Movement protein TGB2 (122 aa).

Topologically, residues 1–12 (MVKSTVPTRPNK) are cytoplasmic. Residues 13–33 (YWPGVVAIGLVSLFIFLSVSN) form a helical membrane-spanning segment. At 34-76 (QKHSTTSGDNIHKFSNGGTYRDGSKCITYNRNSPLAYNGSSSN) the chain is on the lumenal side. Residues 77–97 (NTLFWLCLLGLSMVWIAYCGY) form a helical membrane-spanning segment. Topologically, residues 98 to 122 (KSLSGQWHSCQHDKNERNFLFECFE) are cytoplasmic.

It belongs to the virgaviridae/benyvirus TGB2 movement protein family. In terms of assembly, interacts with movement protein TGB3. TGB1-TGB3-TGB2 complex formation is enhanced by ATP hydrolysis.

Its subcellular location is the host cell junction. It is found in the host plasmodesma. The protein localises to the host endoplasmic reticulum membrane. It localises to the host cytoplasm. The protein resides in the host cytoskeleton. Participates in the transport of viral genome to neighboring plant cells directly through plasmodesmata, without any budding. TGBp2 and TGBp3 are necessary for intracellular delivery of TGBp1-containing vRNPs to plasmodesmata. Can gate plasmodesmata and increase their size exclusion limit. To a lesser extent than TGB3, induces host actin cytoskeleton network thickening, which probably plays a major role in virus cell-to-cell movement. This chain is Movement protein TGB2, found in Peanut clump virus (isolate 87/TGTA2) (PCV).